We begin with the raw amino-acid sequence, 320 residues long: D-alanine--D-alanine ligase (320 aa).

Residues 120 to 314 (SSWFFANSIN…FTNLIAEIIK (195 aa)) form the ATP-grasp domain. ATP is bound at residue 147–198 (MKRPYVIKPLTQGSSIGVEVIFEEDDFNFADYDFPYGDQVVIERYIKGREFQ). The Mg(2+) site is built by glutamate 267, glutamate 281, and asparagine 283.

This sequence belongs to the D-alanine--D-alanine ligase family. Requires Mg(2+) as cofactor. Mn(2+) serves as cofactor.

The protein resides in the cytoplasm. The catalysed reaction is 2 D-alanine + ATP = D-alanyl-D-alanine + ADP + phosphate + H(+). It functions in the pathway cell wall biogenesis; peptidoglycan biosynthesis. In terms of biological role, cell wall formation. The sequence is that of D-alanine--D-alanine ligase from Rickettsia akari (strain Hartford).